Consider the following 196-residue polypeptide: Shikimate kinase (196 aa).

Position 21–26 (21–26 (GTGKSR)) interacts with ATP. Ser25 contributes to the Mg(2+) binding site. 3 residues coordinate substrate: Asp43, Arg67, and Gly89. Arg126 contributes to the ATP binding site. Arg145 is a substrate binding site. Arg161 lines the ATP pocket.

It belongs to the shikimate kinase family. Monomer. The cofactor is Mg(2+).

It is found in the cytoplasm. The enzyme catalyses shikimate + ATP = 3-phosphoshikimate + ADP + H(+). It functions in the pathway metabolic intermediate biosynthesis; chorismate biosynthesis; chorismate from D-erythrose 4-phosphate and phosphoenolpyruvate: step 5/7. Functionally, catalyzes the specific phosphorylation of the 3-hydroxyl group of shikimic acid using ATP as a cosubstrate. In Deinococcus radiodurans (strain ATCC 13939 / DSM 20539 / JCM 16871 / CCUG 27074 / LMG 4051 / NBRC 15346 / NCIMB 9279 / VKM B-1422 / R1), this protein is Shikimate kinase.